The chain runs to 214 residues: Phosphoenolpyruvate guanylyltransferase (214 aa).

Residues threonine 148, glycine 163, and serine 166 each contribute to the phosphoenolpyruvate site.

The protein belongs to the CofC family.

It catalyses the reaction phosphoenolpyruvate + GTP + H(+) = enolpyruvoyl-2-diphospho-5'-guanosine + diphosphate. It participates in cofactor biosynthesis; coenzyme F420 biosynthesis. Guanylyltransferase that catalyzes the activation of phosphoenolpyruvate (PEP) as enolpyruvoyl-2-diphospho-5'-guanosine, via the condensation of PEP with GTP. It is involved in the biosynthesis of coenzyme F420, a hydride carrier cofactor. This chain is Phosphoenolpyruvate guanylyltransferase, found in Mycolicibacterium gilvum (strain PYR-GCK) (Mycobacterium gilvum (strain PYR-GCK)).